The chain runs to 303 residues: Probable porphobilinogen deaminase (303 aa).

At Cys233 the chain carries S-(dipyrrolylmethanemethyl)cysteine.

The protein belongs to the HMBS family. Dipyrromethane is required as a cofactor.

The enzyme catalyses 4 porphobilinogen + H2O = hydroxymethylbilane + 4 NH4(+). It participates in porphyrin-containing compound metabolism; protoporphyrin-IX biosynthesis; coproporphyrinogen-III from 5-aminolevulinate: step 2/4. Functionally, tetrapolymerization of the monopyrrole PBG into the hydroxymethylbilane pre-uroporphyrinogen in several discrete steps. The polypeptide is Probable porphobilinogen deaminase (Methanocella arvoryzae (strain DSM 22066 / NBRC 105507 / MRE50)).